A 635-amino-acid chain; its full sequence is Endo-1,4-beta-xylanase B (635 aa).

One can recognise a GH10 domain in the interval 1–337 (MNLKTAYEPY…KEAYYAVLKA (337 aa)). E150 functions as the Proton donor in the catalytic mechanism. E255 functions as the Nucleophile in the catalytic mechanism.

It belongs to the glycosyl hydrolase 10 (cellulase F) family.

The enzyme catalyses Endohydrolysis of (1-&gt;4)-beta-D-xylosidic linkages in xylans.. It participates in glycan degradation; xylan degradation. In terms of biological role, b.fibrisolvens is located in the rumen of ruminant animals, where it contributes to the animal's digestion of plant material by hydrolyzing hemicellulose with its xylanases. In Butyrivibrio fibrisolvens, this protein is Endo-1,4-beta-xylanase B (xynB).